A 298-amino-acid chain; its full sequence is ATP synthase gamma chain (298 aa).

This sequence belongs to the ATPase gamma chain family. As to quaternary structure, F-type ATPases have 2 components, CF(1) - the catalytic core - and CF(0) - the membrane proton channel. CF(1) has five subunits: alpha(3), beta(3), gamma(1), delta(1), epsilon(1). CF(0) has three main subunits: a, b and c.

The protein resides in the cell inner membrane. In terms of biological role, produces ATP from ADP in the presence of a proton gradient across the membrane. The gamma chain is believed to be important in regulating ATPase activity and the flow of protons through the CF(0) complex. In Bacteroides thetaiotaomicron (strain ATCC 29148 / DSM 2079 / JCM 5827 / CCUG 10774 / NCTC 10582 / VPI-5482 / E50), this protein is ATP synthase gamma chain.